Reading from the N-terminus, the 337-residue chain is Peroxisome biogenesis factor 10 (337 aa).

Residues 1–24 lie on the Peroxisomal matrix side of the membrane; the sequence is MKNDNKLQKEALMRLSQLRFPFAD. A helical membrane pass occupies residues 25–54; sequence APSIVQAHQKDEQIQGLLIMKVTELCKLIK. Ser55 is a topological domain (cytoplasmic). A helical membrane pass occupies residues 56 to 77; the sequence is QLFVNSYPKELSIFAKLLYLLF. The Peroxisomal matrix portion of the chain corresponds to 78-105; it reads TTGRRGRTLGEEYVDLTYTNRKGTRLAG. The chain crosses the membrane as a helical span at residues 106–138; that stretch reads RLKMIVFAFAYPLCPYFITKLYKKIMKNNKESK. Residues 139-145 are Cytoplasmic-facing; the sequence is IEDTESV. Residues 146–166 traverse the membrane as a helical segment; sequence AAFCKGLLDFILDVHMTLFYF. Topologically, residues 167–202 are peroxisomal matrix; the sequence is KGAFYSISKRIFGMRYVFKHILSKNEANFREEGSQK. A helical membrane pass occupies residues 203–222; that stretch reads YKVLGYILLAQNVMKWYPVL. Residues 223 to 337 are Cytoplasmic-facing; sequence TSTLGSWIYG…QPQEILVLRQ (115 aa). Residues Cys286, Cys289, Cys301, His303, Cys306, Cys309, Cys320, and Cys323 each coordinate Zn(2+). The RING-type zinc finger occupies 286–327; that stretch reads CILCLMNMSDPSCAPCGHLFCWSCLMSWCKERPECPLCRQHC.

It belongs to the pex2/pex10/pex12 family. Component of the PEX2-PEX10-PEX12 retrotranslocation channel, composed of PEX2, PEX10 and PEX12.

The protein localises to the peroxisome membrane. The catalysed reaction is S-ubiquitinyl-[E2 ubiquitin-conjugating enzyme]-L-cysteine + [acceptor protein]-L-lysine = [E2 ubiquitin-conjugating enzyme]-L-cysteine + N(6)-ubiquitinyl-[acceptor protein]-L-lysine.. Its pathway is protein modification; protein ubiquitination. The E3 ubiquitin-protein ligase activity is stimulated by PEX12. E3 ubiquitin-protein ligase component of a retrotranslocation channel required for peroxisome organization by mediating export of the PEX5 receptor from peroxisomes to the cytosol, thereby promoting PEX5 recycling. The retrotranslocation channel is composed of PEX2, PEX10 and PEX12; each subunit contributing transmembrane segments that coassemble into an open channel that specifically allows the passage of PEX5 through the peroxisomal membrane. PEX10 also regulates PEX5 recycling by acting as a E3 ubiquitin-protein ligase. When PEX5 recycling is compromised, PEX10 catalyzes polyubiquitination of PEX5 during its passage through the retrotranslocation channel, leading to its degradation. This is Peroxisome biogenesis factor 10 from Saccharomyces cerevisiae (strain ATCC 204508 / S288c) (Baker's yeast).